The sequence spans 318 residues: MMNKLQALRQFSTIVADTGDISAIQSYQPEDTTTNPSLILNATKIPAYRHLIDRSVAWAKRQSSDPKQHQIDATDKLAVDIGVEILKLIPGRISTEVDACLSYDIHASIEKAQKLISLYHEADIHKDRILIKLAATWQGIRAAEALEKLGIRCNLTLLFSFAQARACAEAGVFLISPFVGRILDWYKKNSDTKEFLPTQDPRVLSVQKIYHYYKKHGYETVVMGASFRNTAEILELAGCDRLTISPALLQELSEQQGTVEQKLVFRGALKEKPTPLTESEFYWQHNQDPMAVEKLSEGIRKFAEDQEKLKNVISNLLA.

Residue lysine 132 is the Schiff-base intermediate with substrate of the active site.

This sequence belongs to the transaldolase family. Type 1 subfamily. In terms of assembly, homodimer.

It is found in the cytoplasm. The enzyme catalyses D-sedoheptulose 7-phosphate + D-glyceraldehyde 3-phosphate = D-erythrose 4-phosphate + beta-D-fructose 6-phosphate. Its pathway is carbohydrate degradation; pentose phosphate pathway; D-glyceraldehyde 3-phosphate and beta-D-fructose 6-phosphate from D-ribose 5-phosphate and D-xylulose 5-phosphate (non-oxidative stage): step 2/3. Its function is as follows. Transaldolase is important for the balance of metabolites in the pentose-phosphate pathway. The sequence is that of Transaldolase from Hamiltonella defensa subsp. Acyrthosiphon pisum (strain 5AT).